The sequence spans 1159 residues: WASH complex subunit 5 (1159 aa).

Belongs to the strumpellin family. As to quaternary structure, component of the WASH complex.

The protein localises to the early endosome. Functionally, acts at least in part as component of the WASH complex which seems to regulate washc1 nucleation-promoting factor (NPF) activity and is required for its membrane targeting during endosomal sorting. The polypeptide is WASH complex subunit 5 (Danio rerio (Zebrafish)).